The chain runs to 184 residues: Peptide deformylase 2 (184 aa).

Positions 110 and 153 each coordinate Fe cation. Residue E154 is part of the active site. Fe cation is bound at residue H157.

It belongs to the polypeptide deformylase family. It depends on Fe(2+) as a cofactor.

It catalyses the reaction N-terminal N-formyl-L-methionyl-[peptide] + H2O = N-terminal L-methionyl-[peptide] + formate. Removes the formyl group from the N-terminal Met of newly synthesized proteins. Requires at least a dipeptide for an efficient rate of reaction. N-terminal L-methionine is a prerequisite for activity but the enzyme has broad specificity at other positions. The protein is Peptide deformylase 2 of Bacillus anthracis.